The sequence spans 84 residues: Exodeoxyribonuclease 7 small subunit (84 aa).

It belongs to the XseB family. As to quaternary structure, heterooligomer composed of large and small subunits.

It localises to the cytoplasm. The enzyme catalyses Exonucleolytic cleavage in either 5'- to 3'- or 3'- to 5'-direction to yield nucleoside 5'-phosphates.. Bidirectionally degrades single-stranded DNA into large acid-insoluble oligonucleotides, which are then degraded further into small acid-soluble oligonucleotides. In Caulobacter vibrioides (strain ATCC 19089 / CIP 103742 / CB 15) (Caulobacter crescentus), this protein is Exodeoxyribonuclease 7 small subunit.